A 213-amino-acid polypeptide reads, in one-letter code: Probable transaldolase (213 aa).

K83 (schiff-base intermediate with substrate) is an active-site residue.

Belongs to the transaldolase family. Type 3B subfamily.

It is found in the cytoplasm. It carries out the reaction D-sedoheptulose 7-phosphate + D-glyceraldehyde 3-phosphate = D-erythrose 4-phosphate + beta-D-fructose 6-phosphate. Its pathway is carbohydrate degradation; pentose phosphate pathway; D-glyceraldehyde 3-phosphate and beta-D-fructose 6-phosphate from D-ribose 5-phosphate and D-xylulose 5-phosphate (non-oxidative stage): step 2/3. Transaldolase is important for the balance of metabolites in the pentose-phosphate pathway. The protein is Probable transaldolase of Desulfitobacterium hafniense (strain DSM 10664 / DCB-2).